Here is a 51-residue protein sequence, read N- to C-terminus: uncharacterized protein (51 aa).

This is an uncharacterized protein from Borreliella burgdorferi (strain ATCC 35210 / DSM 4680 / CIP 102532 / B31) (Borrelia burgdorferi).